Here is a 331-residue protein sequence, read N- to C-terminus: 6-phosphogluconolactonase (331 aa).

Lys287 carries the N6-acetyllysine modification.

Belongs to the cycloisomerase 2 family.

It carries out the reaction 6-phospho-D-glucono-1,5-lactone + H2O = 6-phospho-D-gluconate + H(+). It participates in carbohydrate degradation; pentose phosphate pathway; D-ribulose 5-phosphate from D-glucose 6-phosphate (oxidative stage): step 2/3. Functionally, catalyzes the hydrolysis of 6-phosphogluconolactone to 6-phosphogluconate. This is 6-phosphogluconolactonase from Shigella flexneri.